Reading from the N-terminus, the 379-residue chain is MSNKQAVLKLISKRWISTVQRADFKLNSEALHSNATVFSMIQPTGCFHLGNYLGATRVWTDLCELKQPGQELIFGVADLHAITVPKPDGEMFRKFRHEAVASILAVGVDPEKASVIYQSAIPQHSELHWLLSTLASMGLLNRMTQWKSKSNIKQSTNGDYLVNDSDVGKVRLGLFSYPVLQAADILLYKSTHVPVGDDQSQHLELTRHLAEKFNKMYKKNFFPKPVTMLAQTKKVLSLSTPEKKMSKSDPNHDSVIFLNDEPKAIQKKIRKALTDSISDRFYYDPVERPGVSNLINIVSGIQRKSIEDVVEDVSRFNNYRDFKDYVSEVIIEELKGPRTEFEKYINEPTYLHSVVESGMRKAREKAAKNLADIHKIMGF.

ATP is bound by residues glutamine 42 and 48-51 (HLGN). Residues 43 to 51 (PTGCFHLGN) carry the 'HIGH' region motif. Aspartate 184 lines the L-tryptophan pocket. ATP is bound by residues 196–198 (GDD), valine 235, 244–248 (KMSKS), and lysine 247. Positions 244–248 (KMSKS) match the 'KMSKS' region motif.

The protein belongs to the class-I aminoacyl-tRNA synthetase family. As to quaternary structure, homodimer.

The protein resides in the mitochondrion matrix. It carries out the reaction tRNA(Trp) + L-tryptophan + ATP = L-tryptophyl-tRNA(Trp) + AMP + diphosphate + H(+). In terms of biological role, mitochondrial aminoacyl-tRNA synthetase that catalyzes the attachment of tryptophan to tRNA(Trp). This chain is Tryptophan--tRNA ligase, mitochondrial (MSW1), found in Saccharomyces cerevisiae (strain ATCC 204508 / S288c) (Baker's yeast).